The primary structure comprises 649 residues: Epithelial sodium channel subunit gamma (649 aa).

Topologically, residues 1–55 are cytoplasmic; it reads MAPGEKIKAKIKKNLPVTGPQAPTIKELMRWYCLNTNTHGCRRIVVSRGRLRRLL. A helical membrane pass occupies residues 56–76; it reads WIGFTLTAVALILWQCALLVF. The Extracellular segment spans residues 77–541; that stretch reads SFYTVSVSIK…GGQLGLWMSC (465 aa). 8 disulfides stabilise this stretch: cysteine 100/cysteine 283, cysteine 207/cysteine 214, cysteine 260/cysteine 267, cysteine 372/cysteine 457, cysteine 394/cysteine 453, cysteine 398/cysteine 449, cysteine 407/cysteine 434, and cysteine 409/cysteine 423. Residues 135 to 221 are gating release of inhibition by proteolysis (GRIP); protease-sensitive region that is responsible for the proteolytic activation of the channel; that stretch reads RKRREAESWN…SDCATYTFSS (87 aa). N-linked (GlcNAc...) asparagine glycosylation occurs at asparagine 209. Asparagine 497 carries N-linked (GlcNAc...) asparagine glycosylation. A helical membrane pass occupies residues 542-562; that stretch reads SVVCVIEIIEVFFIDFFSIIA. Residues 563-649 lie on the Cytoplasmic side of the membrane; that stretch reads RRQWQKAKEW…LTDTQMLDEL (87 aa). The PY motif; recruits WW domain-containing proteins and is thereby required for ubiquitination and inhibition of the channel by NEDD4 and NEDD4L signature appears at 623–627; it reads PPPKY.

Belongs to the amiloride-sensitive sodium channel (TC 1.A.6) family. SCNN1G subfamily. As to quaternary structure, component of the heterotrimeric epithelial sodium channel (ENaC) composed of an alpha/SCNN1A, a beta/SCNN1B and a gamma/SCNN1G subunit. An additional delta/SCNN1D subunit can replace the alpha/SCNN1A subunit to form an alternative channel with specific properties. Interacts with WWP1 (via WW domains). Interacts with WWP2 (via WW domains); inhibits the channel. Interacts with the full-length immature form of PCSK9 (pro-PCSK9); inhibits ENaC by promoting its proteasomal degradation. Interacts with BPIFA1; the interaction is indirect via SCNN1B and inhibits the proteolytic maturation of SCNN1A and SCNN1G and the activation of ENaC. Post-translationally, phosphorylated on serine and threonine residues. Aldosterone and insulin increase the basal level of phosphorylation. In terms of processing, ubiquitinated. Can be ubiquitinated at multiple sites and undergo monoubiquitination and polyubiquitination. Ubiquitination by NEDD4 or NEDD4L inhibits the ENaC channel through endocytosis, intracellular retention and degradation of its individual subunits. ENaC is activated through the proteolytic maturation of its subunits. Furin cleaves the SCNN1G subunit first, followed by cleavage by prostasin (PRSS8), which results in a stepwise increase in the open probability of the channel due to the release of an inhibitory tract. BPIFA1, which is recruited by the SCNN1B subunit, prevents the proteolytic activation of ENaC. Post-translationally, N-glycosylated. N-linked glycans are processed to complex type during ENaC complex assembly and transport to the plasma membrane. In terms of tissue distribution, expressed in kidney (at protein level).

Its subcellular location is the apical cell membrane. It carries out the reaction Na(+)(in) = Na(+)(out). Its activity is regulated as follows. Originally identified and characterized by its inhibition by the diuretic drug amiloride. In terms of biological role, this is one of the three pore-forming subunits of the heterotrimeric epithelial sodium channel (ENaC), a critical regulator of sodium balance and fluid homeostasis. ENaC operates in epithelial tissues, where it mediates the electrodiffusion of sodium ions from extracellular fluid through the apical membrane of cells, with water following osmotically. It plays a key role in maintaining sodium homeostasis through electrogenic sodium reabsorption in the kidneys. Additionally, ENaC is essential for airway surface liquid homeostasis, which is crucial for proper mucus clearance. In Homo sapiens (Human), this protein is Epithelial sodium channel subunit gamma.